Here is a 22-residue protein sequence, read N- to C-terminus: NADH-ubiquinone oxidoreductase 16 kDa subunit (22 aa).

Complex I is composed of about 45 different subunits.

Its subcellular location is the mitochondrion inner membrane. The enzyme catalyses a ubiquinone + NADH + 5 H(+)(in) = a ubiquinol + NAD(+) + 4 H(+)(out). Its function is as follows. Transfer of electrons from NADH to the respiratory chain. The immediate electron acceptor for the enzyme is believed to be ubiquinone. This Solanum tuberosum (Potato) protein is NADH-ubiquinone oxidoreductase 16 kDa subunit.